The following is a 378-amino-acid chain: Beta sliding clamp (378 aa).

The protein belongs to the beta sliding clamp family. In terms of assembly, forms a ring-shaped head-to-tail homodimer around DNA which binds and tethers DNA polymerases and other proteins to the DNA. The DNA replisome complex has a single clamp-loading complex (3 tau and 1 each of delta, delta', psi and chi subunits) which binds 3 Pol III cores (1 core on the leading strand and 2 on the lagging strand) each with a beta sliding clamp dimer. Additional proteins in the replisome are other copies of gamma, psi and chi, Ssb, DNA helicase and RNA primase.

It localises to the cytoplasm. Its function is as follows. Confers DNA tethering and processivity to DNA polymerases and other proteins. Acts as a clamp, forming a ring around DNA (a reaction catalyzed by the clamp-loading complex) which diffuses in an ATP-independent manner freely and bidirectionally along dsDNA. Initially characterized for its ability to contact the catalytic subunit of DNA polymerase III (Pol III), a complex, multichain enzyme responsible for most of the replicative synthesis in bacteria; Pol III exhibits 3'-5' exonuclease proofreading activity. The beta chain is required for initiation of replication as well as for processivity of DNA replication. In Streptococcus pneumoniae (strain ATCC BAA-255 / R6), this protein is Beta sliding clamp (dnaN).